A 202-amino-acid polypeptide reads, in one-letter code: Imidazoleglycerol-phosphate dehydratase (202 aa).

This sequence belongs to the imidazoleglycerol-phosphate dehydratase family.

The protein localises to the cytoplasm. The enzyme catalyses D-erythro-1-(imidazol-4-yl)glycerol 3-phosphate = 3-(imidazol-4-yl)-2-oxopropyl phosphate + H2O. It participates in amino-acid biosynthesis; L-histidine biosynthesis; L-histidine from 5-phospho-alpha-D-ribose 1-diphosphate: step 6/9. The protein is Imidazoleglycerol-phosphate dehydratase of Nocardioides sp. (strain ATCC BAA-499 / JS614).